Consider the following 167-residue polypeptide: UPF0179 protein Pars_2336 (167 aa).

It belongs to the UPF0179 family.

The chain is UPF0179 protein Pars_2336 from Pyrobaculum arsenaticum (strain DSM 13514 / JCM 11321 / PZ6).